Reading from the N-terminus, the 274-residue chain is Thiazole synthase (274 aa).

The active-site Schiff-base intermediate with DXP is Lys-115. Residues Gly-176, 202–203 (AG), and 224–225 (NS) contribute to the 1-deoxy-D-xylulose 5-phosphate site.

It belongs to the ThiG family. As to quaternary structure, homotetramer. Forms heterodimers with either ThiH or ThiS.

It is found in the cytoplasm. It carries out the reaction [ThiS sulfur-carrier protein]-C-terminal-Gly-aminoethanethioate + 2-iminoacetate + 1-deoxy-D-xylulose 5-phosphate = [ThiS sulfur-carrier protein]-C-terminal Gly-Gly + 2-[(2R,5Z)-2-carboxy-4-methylthiazol-5(2H)-ylidene]ethyl phosphate + 2 H2O + H(+). It functions in the pathway cofactor biosynthesis; thiamine diphosphate biosynthesis. Its function is as follows. Catalyzes the rearrangement of 1-deoxy-D-xylulose 5-phosphate (DXP) to produce the thiazole phosphate moiety of thiamine. Sulfur is provided by the thiocarboxylate moiety of the carrier protein ThiS. In vitro, sulfur can be provided by H(2)S. In Psychrobacter cryohalolentis (strain ATCC BAA-1226 / DSM 17306 / VKM B-2378 / K5), this protein is Thiazole synthase.